A 422-amino-acid polypeptide reads, in one-letter code: Glutamyl-tRNA reductase (422 aa).

Substrate contacts are provided by residues 49–52 (TCNR), Ser-110, 115–117 (EPQ), and Gln-121. Cys-50 serves as the catalytic Nucleophile. Residue 190 to 195 (GAGETI) coordinates NADP(+).

This sequence belongs to the glutamyl-tRNA reductase family. As to quaternary structure, homodimer.

It catalyses the reaction (S)-4-amino-5-oxopentanoate + tRNA(Glu) + NADP(+) = L-glutamyl-tRNA(Glu) + NADPH + H(+). The protein operates within porphyrin-containing compound metabolism; protoporphyrin-IX biosynthesis; 5-aminolevulinate from L-glutamyl-tRNA(Glu): step 1/2. Functionally, catalyzes the NADPH-dependent reduction of glutamyl-tRNA(Glu) to glutamate 1-semialdehyde (GSA). The sequence is that of Glutamyl-tRNA reductase from Colwellia psychrerythraea (strain 34H / ATCC BAA-681) (Vibrio psychroerythus).